Reading from the N-terminus, the 175-residue chain is Large ribosomal subunit protein uL16 (175 aa).

It belongs to the universal ribosomal protein uL16 family.

The polypeptide is Large ribosomal subunit protein uL16 (Caldivirga maquilingensis (strain ATCC 700844 / DSM 13496 / JCM 10307 / IC-167)).